The chain runs to 192 residues: Xanthine phosphoribosyltransferase (192 aa).

Leu20 and Asn27 together coordinate xanthine. 128–132 provides a ligand contact to 5-phospho-alpha-D-ribose 1-diphosphate; that stretch reads ANGDA. Lys156 is a binding site for xanthine.

Belongs to the purine/pyrimidine phosphoribosyltransferase family. Xpt subfamily. Homodimer.

It localises to the cytoplasm. The catalysed reaction is XMP + diphosphate = xanthine + 5-phospho-alpha-D-ribose 1-diphosphate. The protein operates within purine metabolism; XMP biosynthesis via salvage pathway; XMP from xanthine: step 1/1. Its function is as follows. Converts the preformed base xanthine, a product of nucleic acid breakdown, to xanthosine 5'-monophosphate (XMP), so it can be reused for RNA or DNA synthesis. This chain is Xanthine phosphoribosyltransferase, found in Staphylococcus carnosus (strain TM300).